Consider the following 239-residue polypeptide: Putative ankyrin repeat protein RBE_0489 (239 aa).

ANK repeat units lie at residues 23–52 (ISSRNLFKAVEKNNIAGTKFLLEHGISPNA), 80–109 (GIDTPLHIAANNGYTTVVKILLENGAFINA), and 113–143 (FGFTPLHSAIISSYKLSSIKLLLEYGTSLTL).

The chain is Putative ankyrin repeat protein RBE_0489 from Rickettsia bellii (strain RML369-C).